Consider the following 201-residue polypeptide: Dephospho-CoA kinase (201 aa).

The DPCK domain occupies 4 to 201 (IIGITGGIAS…LEGGRQDDRD (198 aa)). Position 12-17 (12-17 (ASGKST)) interacts with ATP.

The protein belongs to the CoaE family.

Its subcellular location is the cytoplasm. It carries out the reaction 3'-dephospho-CoA + ATP = ADP + CoA + H(+). Its pathway is cofactor biosynthesis; coenzyme A biosynthesis; CoA from (R)-pantothenate: step 5/5. Its function is as follows. Catalyzes the phosphorylation of the 3'-hydroxyl group of dephosphocoenzyme A to form coenzyme A. The sequence is that of Dephospho-CoA kinase from Streptococcus pneumoniae serotype 4 (strain ATCC BAA-334 / TIGR4).